The following is a 521-amino-acid chain: Hyccin (521 aa).

At threonine 306 the chain carries Phosphothreonine. The residue at position 321 (serine 321) is a Phosphoserine. Residues 355–373 (AASSTSQSGLSNSSHNCSN) are compositionally biased toward low complexity. The tract at residues 355-413 (AASSTSQSGLSNSSHNCSNKTSVGKNQRRSGGSKAGAKERETAGESCRDHFARKQTQRA) is disordered. Residues 390 to 406 (GAKERETAGESCRDHFA) show a composition bias toward basic and acidic residues. Phosphoserine occurs at positions 415, 422, 433, 453, and 465.

Belongs to the Hyccin family. Component of a phosphatidylinositol 4-kinase (PI4K) complex, composed of PI4KA, EFR3 (EFR3A or EFR3B), TTC7 (TTC7A or TTC7B) and HYCC (HYCC1 or HYCC2). Interacts with TTC7 (TTC7A or TTC7B), interaction is direct. Predominantly expressed in the central nervous system, where it is found in neurons but not in myelinating cells. Lower abundance is observed in peripheral neurons, where it is detectable only at early postnatal ages. Expressed in both oligodendrocytes and neurons.

The protein resides in the cytoplasm. It localises to the cytosol. The protein localises to the cell membrane. Component of a complex required to localize phosphatidylinositol 4-kinase (PI4K) to the plasma membrane. The complex acts as a regulator of phosphatidylinositol 4-phosphate (PtdIns(4)P) synthesis. HYCC1 plays a key role in oligodendrocytes formation, a cell type with expanded plasma membrane that requires generation of PtdIns(4)P. Its role in oligodendrocytes formation probably explains its importance in myelination of the central and peripheral nervous system. May also have a role in the beta-catenin/Lef signaling pathway. This chain is Hyccin (Hycc1), found in Mus musculus (Mouse).